The primary structure comprises 279 residues: Pantothenate synthetase (279 aa).

Methionine 31–histidine 38 contacts ATP. The Proton donor role is filled by histidine 38. Glutamine 62 is a (R)-pantoate binding site. Glutamine 62 is a binding site for beta-alanine. Glycine 148–aspartate 151 is an ATP binding site. (R)-pantoate is bound at residue glutamine 154. ATP contacts are provided by residues valine 177 and leucine 185–arginine 188.

Belongs to the pantothenate synthetase family. As to quaternary structure, homodimer.

It is found in the cytoplasm. It carries out the reaction (R)-pantoate + beta-alanine + ATP = (R)-pantothenate + AMP + diphosphate + H(+). The protein operates within cofactor biosynthesis; (R)-pantothenate biosynthesis; (R)-pantothenate from (R)-pantoate and beta-alanine: step 1/1. Catalyzes the condensation of pantoate with beta-alanine in an ATP-dependent reaction via a pantoyl-adenylate intermediate. In Cereibacter sphaeroides (strain ATCC 17023 / DSM 158 / JCM 6121 / CCUG 31486 / LMG 2827 / NBRC 12203 / NCIMB 8253 / ATH 2.4.1.) (Rhodobacter sphaeroides), this protein is Pantothenate synthetase.